The sequence spans 1310 residues: Cadherin-related family member 2 (1310 aa).

A signal peptide spans 1 to 20 (MAQLWLSCFLLPALVVSVAA). At 21-1154 (NVAPKFLANM…ESDLSKQLIS (1134 aa)) the chain is on the extracellular side. 3 consecutive Cadherin domains span residues 27-124 (LANM…APVF), 125-241 (QNTA…DPQF), and 242-353 (VREF…KPEF). N-linked (GlcNAc...) asparagine glycans are attached at residues N29, N134, N182, N188, N195, N300, N355, N371, N401, N460, N565, N600, N616, N632, N680, N696, N701, N775, N821, N871, N877, N911, N932, and N1107. 6 consecutive Cadherin domains span residues 368–480 (AQVN…RPTF), 481–586 (PQSL…APVV), 586–695 (VSGS…LPIF), 696–808 (NQSS…PPTL), 810–928 (VASL…APYF), and 930–1058 (PENK…TPKE). A helical transmembrane segment spans residues 1155–1175 (VIIGLGVALLLVLVIMTMAFV). The Cytoplasmic portion of the chain corresponds to 1176 to 1310 (CVRKSYNRKL…TNAGLDTTDL (135 aa)). The segment at 1180-1310 (SYNRKLQAMK…TNAGLDTTDL (131 aa)) is mediates interaction with USH1C and MYO7B and is required for proper localization to microvilli tips and function in microvilli organization. S1248 carries the phosphoserine modification. The span at 1259–1268 (NSQEIKEHRP) shows a compositional bias: basic and acidic residues. Residues 1259–1310 (NSQEIKEHRPPHTPPEPDPEPLSVVLLGRQAGASGQLEGPSYTNAGLDTTDL) are disordered. Position 1299 is a phosphoserine (S1299). The span at 1299 to 1310 (SYTNAGLDTTDL) shows a compositional bias: polar residues.

In terms of assembly, part of the IMAC/intermicrovillar adhesion complex/intermicrovillar tip-link complex composed of ANKS4B, MYO7B, USH1C, CDHR2 and CDHR5. Interacts with MAST2. Interacts (via cytoplasmic domain) with USH1C and MYO7B; required for proper localization of CDHR2 to microvilli tips and its function in brush border differentiation. In terms of tissue distribution, highly expressed in liver, kidney and colon. Moderately expressed in small intestine. Down-regulated in a number of liver and colon cancers. Expressed in duodenum with higher expression in enterocytes along the villus axis and lower expression in crypts (at protein level).

Its subcellular location is the apical cell membrane. It localises to the cell projection. The protein localises to the microvillus membrane. It is found in the cell junction. Its function is as follows. Intermicrovillar adhesion molecule that forms, via its extracellular domain, calcium-dependent heterophilic complexes with CDHR5 on adjacent microvilli. Thereby, controls the packing of microvilli at the apical membrane of epithelial cells. Through its cytoplasmic domain, interacts with microvillus cytoplasmic proteins to form the intermicrovillar adhesion complex/IMAC. This complex plays a central role in microvilli and epithelial brush border differentiation. May also play a role in cell-cell adhesion and contact inhibition in epithelial cells. The chain is Cadherin-related family member 2 from Homo sapiens (Human).